A 702-amino-acid chain; its full sequence is Phosphoglycerol transferase I (702 aa).

3 helical membrane-spanning segments follow: residues tryptophan 3–leucine 25, glycine 73–arginine 95, and glycine 102–tyrosine 124.

Belongs to the OpgB family.

It localises to the cell inner membrane. The catalysed reaction is a phosphatidylglycerol + a membrane-derived-oligosaccharide D-glucose = a 1,2-diacyl-sn-glycerol + a membrane-derived-oligosaccharide 6-(glycerophospho)-D-glucose.. The protein operates within glycan metabolism; osmoregulated periplasmic glucan (OPG) biosynthesis. Functionally, transfers a phosphoglycerol residue from phosphatidylglycerol to the membrane-bound nascent glucan backbones. This chain is Phosphoglycerol transferase I, found in Xanthomonas campestris pv. campestris (strain ATCC 33913 / DSM 3586 / NCPPB 528 / LMG 568 / P 25).